Reading from the N-terminus, the 289-residue chain is Borealin (289 aa).

Positions 1–58 (MAPKKRSSRGTRTNTLRSRKLASFLKDFDREVQVRTKQIESDRQTLLKEVENLYNIEI) are required for interaction with INCENP. Residues 1–88 (MAPKKRSSRG…NKQALEEAAK (88 aa)) are required for centromere localization. The interval 1–150 (MAPKKRSSRG…KKSHKNLRSA (150 aa)) is required for interaction with SENP3. Residues 10–109 (GTRTNTLRSR…TAEAIQTPLK (100 aa)) form a required to form a minimal CPC core complex that localizes to the central spindle and midbody and properly executes the role of the CPC during cytokinesis region. Residues 20-78 (KLASFLKDFDREVQVRTKQIESDRQTLLKEVENLYNIEILRLPKALQGMKWLDYFALGG) are required for interaction with INCENP and BIRC5. Arg91 carries the post-translational modification Citrulline. Thr94 bears the Phosphothreonine; by TTK mark. Phosphothreonine is present on Thr106. Ser110 is modified (phosphoserine). The tract at residues 122–173 (SIKEEEEEEEEGGGGGGRTKKSHKNLRSAKVKRCLPSKKRTQSIQGRGRSKR) is disordered. A compositionally biased stretch (acidic residues) spans 123–133 (IKEEEEEEEEG). Residues 139–162 (RTKKSHKNLRSAKVKRCLPSKKRT) show a composition bias toward basic residues. Residue Lys145 forms a Glycyl lysine isopeptide (Lys-Gly) (interchain with G-Cter in SUMO2) linkage. Ser175 carries the post-translational modification Phosphoserine. Residues Thr198 and Thr213 each carry the phosphothreonine modification. Ser228, Ser233, Ser247, and Ser253 each carry phosphoserine.

Belongs to the borealin family. May form homooligomers and homodimers. Component of the chromosomal passenger complex (CPC) composed of at least BIRC5/survivin, CDCA8/borealin, INCENP, AURKB or AURKC; in the complex forms a triple-helix bundle-based subcomplex with INCENP and BIRC5. Interacts with SENP3, UBE2I and RANBP2. Interacts (phosphorylated) with SGO1 and SGO2A; the association is dependent on CDK1. Post-translationally, phosphorylated by TTK, essentially at Thr-94. Phosphorylation (probably by CDK1) promotes targeting of the CPC to centromeric DNA. Sumoylated by UBE2I and RANBP2. Desumoylated by SENP3 through the removal of SUMO2 and SUMO3. In terms of processing, citrullinated by PADI4.

Its subcellular location is the nucleus. It localises to the nucleolus. The protein localises to the cytoplasm. It is found in the chromosome. The protein resides in the centromere. Its subcellular location is the cytoskeleton. It localises to the spindle. Component of the chromosomal passenger complex (CPC), a complex that acts as a key regulator of mitosis. The CPC complex has essential functions at the centromere in ensuring correct chromosome alignment and segregation and is required for chromatin-induced microtubule stabilization and spindle assembly. In the complex, it may be required to direct the CPC to centromeric DNA. Major effector of the TTK kinase in the control of attachment-error-correction and chromosome alignment. This Mus musculus (Mouse) protein is Borealin (Cdca8).